The chain runs to 243 residues: R-spondin-2 (243 aa).

Positions 1–21 are cleaved as a signal peptide; it reads MQFQLFSFVLIILNCVDYSHC. Cystine bridges form between Cys40/Cys46, Cys43/Cys52, Cys55/Cys74, Cys78/Cys93, Cys96/Cys104, Cys101/Cys110, Cys113/Cys124, Cys128/Cys141, Cys145/Cys187, Cys156/Cys163, and Cys196/Cys203. The FU repeat unit spans residues 90 to 134; it reads MNRCSRCRIENCDSCFSRDFCIKCKSGFYSHKGQCFEECPEGFAP. One can recognise a TSP type-1 domain in the interval 144-204; it reads GCEVGPWSEW…RCKMAMRHCP (61 aa). Asn160 carries an N-linked (GlcNAc...) asparagine glycan. The disordered stretch occupies residues 202 to 243; the sequence is HCPGGTRTTKKKDKKNKKKKKKLLERAQEQHSVVLATDRSSQ. Basic residues predominate over residues 209–224; it reads TTKKKDKKNKKKKKKL.

This sequence belongs to the R-spondin family. Binds heparin.

It localises to the secreted. Activator of the canonical Wnt signaling pathway by acting as a ligand for lgr4-6 receptors. Upon binding to lgr4-6 (lgr4, lgr5 or lgr6), lgr4-6 associate with phosphorylated lrp6 and frizzled receptors that are activated by extracellular Wnt receptors, triggering the canonical Wnt signaling pathway to increase expression of target genes. Acts both in the canonical. Wnt/beta-catenin-dependent pathway and in non-canonical Wnt signaling pathway. Activates neural markers and promotes muscle formation. Overexpression blocks activin, nodal and BMP4 signaling, suggesting that it may negatively regulate the TGF-beta pathway. During embryonic development, plays a crucial role in limb specification, amplifying the Wnt signaling pathway independently of LGR4-6 receptors, possibly by acting as a direct antagonistic ligand to RNF43 and ZNRF3, hence governing the number of limbs an embryo should form. This chain is R-spondin-2 (rspo2), found in Xenopus tropicalis (Western clawed frog).